The primary structure comprises 179 residues: Large ribosomal subunit protein uL5 (179 aa).

It belongs to the universal ribosomal protein uL5 family. As to quaternary structure, part of the 50S ribosomal subunit; part of the 5S rRNA/L5/L18/L25 subcomplex. Contacts the 5S rRNA and the P site tRNA. Forms a bridge to the 30S subunit in the 70S ribosome.

Its function is as follows. This is one of the proteins that bind and probably mediate the attachment of the 5S RNA into the large ribosomal subunit, where it forms part of the central protuberance. In the 70S ribosome it contacts protein S13 of the 30S subunit (bridge B1b), connecting the 2 subunits; this bridge is implicated in subunit movement. Contacts the P site tRNA; the 5S rRNA and some of its associated proteins might help stabilize positioning of ribosome-bound tRNAs. This is Large ribosomal subunit protein uL5 from Buchnera aphidicola subsp. Schizaphis graminum (strain Sg).